We begin with the raw amino-acid sequence, 258 residues long: Cell division protein ZapD (258 aa).

Belongs to the ZapD family. In terms of assembly, interacts with FtsZ.

The protein resides in the cytoplasm. Functionally, cell division factor that enhances FtsZ-ring assembly. Directly interacts with FtsZ and promotes bundling of FtsZ protofilaments, with a reduction in FtsZ GTPase activity. The polypeptide is Cell division protein ZapD (Coxiella burnetii (strain RSA 331 / Henzerling II)).